Here is a 160-residue protein sequence, read N- to C-terminus: Aspartate carbamoyltransferase regulatory chain (160 aa).

Zn(2+) contacts are provided by Cys-110, Cys-115, Cys-140, and Cys-143.

The protein belongs to the PyrI family. Contains catalytic and regulatory chains. Zn(2+) is required as a cofactor.

Functionally, involved in allosteric regulation of aspartate carbamoyltransferase. The protein is Aspartate carbamoyltransferase regulatory chain of Hyperthermus butylicus (strain DSM 5456 / JCM 9403 / PLM1-5).